The following is a 110-amino-acid chain: Eukaryotic translation initiation factor eIF1 (110 aa).

T40 carries the post-translational modification Phosphothreonine.

The protein belongs to the SUI1 family.

Probably involved in translation. In Drosophila melanogaster (Fruit fly), this protein is Eukaryotic translation initiation factor eIF1.